A 299-amino-acid polypeptide reads, in one-letter code: Phosphatidylserine decarboxylase proenzyme (299 aa).

Active-site charge relay system; for autoendoproteolytic cleavage activity residues include D115, H171, and S258. S258 serves as the catalytic Schiff-base intermediate with substrate; via pyruvic acid; for decarboxylase activity. Position 258 is a pyruvic acid (Ser); by autocatalysis (S258).

Belongs to the phosphatidylserine decarboxylase family. PSD-B subfamily. Prokaryotic type II sub-subfamily. Heterodimer of a large membrane-associated beta subunit and a small pyruvoyl-containing alpha subunit. It depends on pyruvate as a cofactor. Is synthesized initially as an inactive proenzyme. Formation of the active enzyme involves a self-maturation process in which the active site pyruvoyl group is generated from an internal serine residue via an autocatalytic post-translational modification. Two non-identical subunits are generated from the proenzyme in this reaction, and the pyruvate is formed at the N-terminus of the alpha chain, which is derived from the carboxyl end of the proenzyme. The autoendoproteolytic cleavage occurs by a canonical serine protease mechanism, in which the side chain hydroxyl group of the serine supplies its oxygen atom to form the C-terminus of the beta chain, while the remainder of the serine residue undergoes an oxidative deamination to produce ammonia and the pyruvoyl prosthetic group on the alpha chain. During this reaction, the Ser that is part of the protease active site of the proenzyme becomes the pyruvoyl prosthetic group, which constitutes an essential element of the active site of the mature decarboxylase.

It is found in the cell membrane. It catalyses the reaction a 1,2-diacyl-sn-glycero-3-phospho-L-serine + H(+) = a 1,2-diacyl-sn-glycero-3-phosphoethanolamine + CO2. The protein operates within phospholipid metabolism; phosphatidylethanolamine biosynthesis; phosphatidylethanolamine from CDP-diacylglycerol: step 2/2. In terms of biological role, catalyzes the formation of phosphatidylethanolamine (PtdEtn) from phosphatidylserine (PtdSer). The chain is Phosphatidylserine decarboxylase proenzyme from Chlamydia caviae (strain ATCC VR-813 / DSM 19441 / 03DC25 / GPIC) (Chlamydophila caviae).